A 296-amino-acid polypeptide reads, in one-letter code: Phosphatidylglycerol--prolipoprotein diacylglyceryl transferase (296 aa).

The next 4 helical transmembrane spans lie at 10-30 (IAFS…LAAF), 57-77 (LLFY…MLFY), 92-112 (VWEG…ACWL), and 119-139 (LHFF…LGFG). Arg-140 lines the a 1,2-diacyl-sn-glycero-3-phospho-(1'-sn-glycerol) pocket. A run of 3 helical transmembrane segments spans residues 194-214 (QLYE…TFSM), 220-240 (YALS…VEFV), and 254-274 (WLTM…ALLA).

Belongs to the Lgt family.

The protein resides in the cell inner membrane. The catalysed reaction is L-cysteinyl-[prolipoprotein] + a 1,2-diacyl-sn-glycero-3-phospho-(1'-sn-glycerol) = an S-1,2-diacyl-sn-glyceryl-L-cysteinyl-[prolipoprotein] + sn-glycerol 1-phosphate + H(+). The protein operates within protein modification; lipoprotein biosynthesis (diacylglyceryl transfer). Its function is as follows. Catalyzes the transfer of the diacylglyceryl group from phosphatidylglycerol to the sulfhydryl group of the N-terminal cysteine of a prolipoprotein, the first step in the formation of mature lipoproteins. The chain is Phosphatidylglycerol--prolipoprotein diacylglyceryl transferase from Xanthomonas oryzae pv. oryzae (strain MAFF 311018).